The primary structure comprises 72 residues: Small ribosomal subunit protein bS20 (72 aa).

Belongs to the bacterial ribosomal protein bS20 family.

In terms of biological role, binds directly to 16S ribosomal RNA. This Klebsiella pneumoniae protein is Small ribosomal subunit protein bS20 (rpsT).